Consider the following 87-residue polypeptide: Cell division topological specificity factor (87 aa).

Belongs to the MinE family.

Prevents the cell division inhibition by proteins MinC and MinD at internal division sites while permitting inhibition at polar sites. This ensures cell division at the proper site by restricting the formation of a division septum at the midpoint of the long axis of the cell. In Aliivibrio fischeri (strain ATCC 700601 / ES114) (Vibrio fischeri), this protein is Cell division topological specificity factor.